The primary structure comprises 85 residues: MTMFKGSNEMKSRWNWGSITCIICFTCVGSQLSMSSSKASNFSGPLQLYQRELEIFIVLTDVPNYRLIKENSHLHTTIVDQGRTV.

The Extracellular segment spans residues 1–18; sequence MTMFKGSNEMKSRWNWGS. The helical transmembrane segment at 19-37 threads the bilayer; that stretch reads ITCIICFTCVGSQLSMSSS. Over 38-85 the chain is Cytoplasmic; that stretch reads KASNFSGPLQLYQRELEIFIVLTDVPNYRLIKENSHLHTTIVDQGRTV.

In terms of processing, N-glycosylated. As to expression, expressed in kidney. Expressed in endothelial cells.

It is found in the cell membrane. Functionally, dual receptor for both endothelin-1 and the signal sequence of vascular endothelial growth factor A. Does not act as a receptor for angiotensin-2. Does not bind the VEGFA mature protein. May play a role in angiogenesis with a significant role in cardiovascular and neural development. The sequence is that of Dual endothelin-1/VEGF signal peptide receptor from Homo sapiens (Human).